The sequence spans 195 residues: Transcription factor LBX2 (195 aa).

2 disordered regions span residues 1–89 (MNSV…KSRT) and 164–195 (PALP…QVDD). The segment at residues 84-143 (RRKSRTAFTAQQVLELERRFVFQKYLAPSERDGLAARLGLANAQVVTWFQNRRAKLKRDV) is a DNA-binding region (homeobox). Over residues 186-195 (LSDEEIQVDD) the composition is skewed to acidic residues.

In terms of tissue distribution, expressed in the developing urogenital system, eye and brain.

Its subcellular location is the nucleus. Transcription factor. This Mus musculus (Mouse) protein is Transcription factor LBX2 (Lbx2).